The sequence spans 237 residues: MKLTPKELDKLMLHYAGRLAEEALARGVKLNYTEAVALISGRVMEKARDGNKSVADLMQEGRTWLKKENVMDGVASMIHEVGIEANFPDGTKLVTIHTPVEDNGKLAPGEVFLKNEDITINAGKEAISLKVKNKGDRPVQVGSHFHFFEVNKLLDFDRAKSFCKRLDIASGTAVRFEPGEEKSVELIDIGGNKRIYGFNSLVDRQADADGKKLGLKRAKEKGFGSVNCGCEATKDKQ.

Positions 1 to 102 (MKLTPKELDK…LVTIHTPVED (102 aa)) are urease gamma. The interval 103–237 (NGKLAPGEVF…CGCEATKDKQ (135 aa)) is urease beta.

The protein in the N-terminal section; belongs to the urease gamma subunit family. It in the C-terminal section; belongs to the urease beta subunit family. As to quaternary structure, heterohexamer of 3 UreA (alpha) and 3 UreB (beta) subunits.

Its subcellular location is the cytoplasm. The enzyme catalyses urea + 2 H2O + H(+) = hydrogencarbonate + 2 NH4(+). The protein operates within nitrogen metabolism; urea degradation; CO(2) and NH(3) from urea (urease route): step 1/1. The sequence is that of Urease subunit alpha from Helicobacter felis.